The following is a 283-amino-acid chain: Pantothenate synthetase (283 aa).

34-41 is an ATP binding site; it reads MGALHDGH. H41 (proton donor) is an active-site residue. Q65 contributes to the (R)-pantoate binding site. Residue Q65 coordinates beta-alanine. Residue 152-155 participates in ATP binding; the sequence is GEKD. Q158 contacts (R)-pantoate. ATP contacts are provided by residues V181 and 189–192; that span reads MSSR.

It belongs to the pantothenate synthetase family. As to quaternary structure, homodimer.

Its subcellular location is the cytoplasm. It catalyses the reaction (R)-pantoate + beta-alanine + ATP = (R)-pantothenate + AMP + diphosphate + H(+). It functions in the pathway cofactor biosynthesis; (R)-pantothenate biosynthesis; (R)-pantothenate from (R)-pantoate and beta-alanine: step 1/1. In terms of biological role, catalyzes the condensation of pantoate with beta-alanine in an ATP-dependent reaction via a pantoyl-adenylate intermediate. This Bradyrhizobium sp. (strain BTAi1 / ATCC BAA-1182) protein is Pantothenate synthetase.